Reading from the N-terminus, the 652-residue chain is Putative ankyrin repeat protein R734 (652 aa).

10 ANK repeats span residues 77 to 105, 106 to 136, 138 to 167, 192 to 219, 220 to 242, 243 to 274, 307 to 337, 396 to 430, 468 to 498, and 535 to 564; these read TNDIIITNTLDLNDLETFIYLLTNGANNS, EGIKLLVTWCVYYGRLDVLNYLVDNNILPTE, TLRDYLPITISENHDEVYKFIIDHEFHLGY, NDLKLSDLIFMHHLKVEILQELFSSGYE, FDNRLFEKICRTTNITLIKFFMD, IGFDPMNIVIQPNQLCIYLANILLDSGRQFTQ, INDNFINCIIRRGSLDHLKDILNRTSLNINR, SDNNIINFINHGTGTHKFEILKYLLENDCYEDPNY, PKLTPIIISNYLLSNRKISNTLLKFGTTIYS, and TNKSIMLATIISENIDLFDFLLELNRDNNL.

This is Putative ankyrin repeat protein R734 from Acanthamoeba polyphaga mimivirus (APMV).